Consider the following 242-residue polypeptide: Polycomb group RING finger protein 3 (242 aa).

An RING-type zinc finger spans residues 17–56; the sequence is CRLCNGYLIDATTVTECLHTFCRSCLVKYLEENNTCPTCR. The disordered stretch occupies residues 120 to 149; it reads EAHRNGETKTDEHTHKEPPEEKQEEDHDYH.

In terms of assembly, component of a PRC1-like complex.

The protein localises to the nucleus. Component of a Polycomb group (PcG) multiprotein PRC1-like complex, a complex class required to maintain the transcriptionally repressive state of many genes, including Hox genes, throughout development. PcG PRC1 complex acts via chromatin remodeling and modification of histones; it mediates monoubiquitination of histone H2A 'Lys-119', rendering chromatin heritably changed in its expressibility. Within the PRC1-like complex, regulates RNF2 ubiquitin ligase activity. In Xenopus tropicalis (Western clawed frog), this protein is Polycomb group RING finger protein 3 (pcgf3).